Consider the following 461-residue polypeptide: MNKPITASTYVRCLSLGLIRKLSDFIDPQEGWKKLAVAIKKPSGDDRYNQFHIRRFEALLQIGKSPTCELLFDWGTTNCTVGDLVDILVQNEFFAPASLLLPDAVPKNVNTLPSKVTVVAVQQKPKPLCGKDRTSVISDENPEQNYVLPDSSSPENTSLEFSDTRFHSFSFFELKDVTNNFDERPISVGGNKMGEGGFGVVYKGYVNNRTVAVKKLAAMVDISTEELKQQFDQEIKVMAKCQHENLVELLGFSSDGDDLCLVYVYMPNGSLLDRLSCLDGTPPLSWNMRCKIAQGAANGLSYLHENHHIHRDIKSANILLDEDFTAKISDFGLARASEKFAQTVMTSRIVGTTAYMAPEALRGEITPKSDIYSFGVVLLEIITGLPAVDEHREPQLLLDIKEEIEDEEKTIEDYVDRKMNDIDSTSIETMYSVASQCLHEKKNKRPDIKKVQQLLEEMTGS.

M1 carries the N-acetylmethionine modification. A Death domain is found at 20–104; it reads RKLSDFIDPQ…APASLLLPDA (85 aa). Residue K34 is modified to N6-acetyllysine. In terms of domain architecture, Protein kinase spans 187 to 455; the sequence is SVGGNKMGEG…PDIKKVQQLL (269 aa). ATP is bound by residues 193–201 and K214; that span reads MGEGGFGVV. Residue D312 is the Proton acceptor of the active site. ATP-binding positions include 314-317 and D330; that span reads KSAN. A phosphothreonine mark is found at T343 and T346. S347 carries the phosphoserine modification.

The protein belongs to the protein kinase superfamily. TKL Ser/Thr protein kinase family. Pelle subfamily. As to quaternary structure, associates with MYD88 and IRAK2 to form a ternary complex called the Myddosome. Once phosphorylated, IRAK4 dissociates from the receptor complex and then associates with the TNF receptor-associated factor 6 (TRAF6), IRAK1, and PELI1; this intermediate complex is required for subsequent NF-kappa-B activation. Direct binding of SMAD6 to PELI1 prevents complex formation and hence negatively regulates IL1R-TLR signaling and eventually NF-kappa-B-mediated gene expression. Interacts with IL1RL1. Interacts (when phosphorylated) with IRAK1. May interact (when phosphorylated) with IRAK3. The cofactor is Mg(2+). Post-translationally, phosphorylated.

The protein localises to the cytoplasm. The enzyme catalyses L-seryl-[protein] + ATP = O-phospho-L-seryl-[protein] + ADP + H(+). The catalysed reaction is L-threonyl-[protein] + ATP = O-phospho-L-threonyl-[protein] + ADP + H(+). Functionally, serine/threonine-protein kinase that plays a critical role in initiating innate immune response against foreign pathogens. Involved in Toll-like receptor (TLR) and IL-1R signaling pathways. Is rapidly recruited by MYD88 to the receptor-signaling complex upon TLR activation to form the Myddosome together with IRAK2. Phosphorylates initially IRAK1, thus stimulating the kinase activity and intensive autophosphorylation of IRAK1. Phosphorylates E3 ubiquitin ligases Pellino proteins (PELI1, PELI2 and PELI3) to promote pellino-mediated polyubiquitination of IRAK1. Then, the ubiquitin-binding domain of IKBKG/NEMO binds to polyubiquitinated IRAK1 bringing together the IRAK1-MAP3K7/TAK1-TRAF6 complex and the NEMO-IKKA-IKKB complex. In turn, MAP3K7/TAK1 activates IKKs (CHUK/IKKA and IKBKB/IKKB) leading to NF-kappa-B nuclear translocation and activation. Alternatively, phosphorylates TIRAP to promote its ubiquitination and subsequent degradation. Phosphorylates NCF1 and regulates NADPH oxidase activation after LPS stimulation suggesting a similar mechanism during microbial infections. The protein is Interleukin-1 receptor-associated kinase 4 (IRAK4) of Bos taurus (Bovine).